Consider the following 213-residue polypeptide: Small ribosomal subunit protein eS1 (213 aa).

This sequence belongs to the eukaryotic ribosomal protein eS1 family.

The sequence is that of Small ribosomal subunit protein eS1 from Desulfurococcus amylolyticus (strain DSM 18924 / JCM 16383 / VKM B-2413 / 1221n) (Desulfurococcus kamchatkensis).